The chain runs to 106 residues: Large ribosomal subunit protein uL24 (106 aa).

The protein belongs to the universal ribosomal protein uL24 family. As to quaternary structure, part of the 50S ribosomal subunit.

In terms of biological role, one of two assembly initiator proteins, it binds directly to the 5'-end of the 23S rRNA, where it nucleates assembly of the 50S subunit. Functionally, one of the proteins that surrounds the polypeptide exit tunnel on the outside of the subunit. This is Large ribosomal subunit protein uL24 from Blochmanniella pennsylvanica (strain BPEN).